A 444-amino-acid chain; its full sequence is Putative methylesterase 13, chloroplastic (444 aa).

Disordered regions lie at residues 1–32 (MGNS…KYKY), 49–90 (PSLS…KDSH), and 124–176 (SVVY…QLVD). Residues 1-60 (MGNSFTCISHEQEQRPKKSSGGGGNNSGKYKYVRRLSLMPSFRRRTLLPSLSCSGSSSTS) constitute a chloroplast transit peptide. Residues 49-64 (PSLSCSGSSSTSSSKK) are compositionally biased toward low complexity. Positions 65 to 82 (GGIKAKTKKIRERHHHHH) are enriched in basic residues. Residues 124–148 (SVVYPSAQPSGTSSGPVSAVQTPKK) are compositionally biased toward polar residues. Low complexity predominate over residues 149–164 (SSAGFVRSSSSRQRSS). Residues 190-310 (FVLVHGGGFG…LFNQQLGSND (121 aa)) enclose the AB hydrolase-1 domain. The Acyl-ester intermediate role is filled by D264. Catalysis depends on charge relay system residues D390 and H418.

Belongs to the AB hydrolase superfamily. Methylesterase family.

Its subcellular location is the plastid. It localises to the chloroplast. Putative methylesterase. This chain is Putative methylesterase 13, chloroplastic, found in Arabidopsis thaliana (Mouse-ear cress).